The following is a 231-amino-acid chain: 5'-methylthioadenosine/S-adenosylhomocysteine nucleosidase (231 aa).

The active-site Proton acceptor is E12. Substrate-binding positions include G78, M153, and 174–175 (ME). D198 functions as the Proton donor in the catalytic mechanism.

It belongs to the PNP/UDP phosphorylase family. MtnN subfamily.

The enzyme catalyses S-adenosyl-L-homocysteine + H2O = S-(5-deoxy-D-ribos-5-yl)-L-homocysteine + adenine. It catalyses the reaction S-methyl-5'-thioadenosine + H2O = 5-(methylsulfanyl)-D-ribose + adenine. The catalysed reaction is 5'-deoxyadenosine + H2O = 5-deoxy-D-ribose + adenine. It participates in amino-acid biosynthesis; L-methionine biosynthesis via salvage pathway; S-methyl-5-thio-alpha-D-ribose 1-phosphate from S-methyl-5'-thioadenosine (hydrolase route): step 1/2. Functionally, catalyzes the irreversible cleavage of the glycosidic bond in both 5'-methylthioadenosine (MTA) and S-adenosylhomocysteine (SAH/AdoHcy) to adenine and the corresponding thioribose, 5'-methylthioribose and S-ribosylhomocysteine, respectively. Also cleaves 5'-deoxyadenosine, a toxic by-product of radical S-adenosylmethionine (SAM) enzymes, into 5-deoxyribose and adenine. The sequence is that of 5'-methylthioadenosine/S-adenosylhomocysteine nucleosidase from Bacillus thuringiensis subsp. konkukian (strain 97-27).